Consider the following 163-residue polypeptide: Lipoprotein signal peptidase (163 aa).

Transmembrane regions (helical) follow at residues 11 to 31 (ILIA…IATT), 63 to 83 (KMTF…YFFI), and 88 to 108 (YNLF…GNFI). Residues Asp118 and Asp136 contribute to the active site. The helical transmembrane segment at 131 to 151 (IFNIADSSLTIGVILIIIALL) threads the bilayer.

The protein belongs to the peptidase A8 family.

It localises to the cell membrane. It carries out the reaction Release of signal peptides from bacterial membrane prolipoproteins. Hydrolyzes -Xaa-Yaa-Zaa-|-(S,diacylglyceryl)Cys-, in which Xaa is hydrophobic (preferably Leu), and Yaa (Ala or Ser) and Zaa (Gly or Ala) have small, neutral side chains.. Its pathway is protein modification; lipoprotein biosynthesis (signal peptide cleavage). Its function is as follows. This protein specifically catalyzes the removal of signal peptides from prolipoproteins. This chain is Lipoprotein signal peptidase, found in Staphylococcus aureus.